Here is a 298-residue protein sequence, read N- to C-terminus: Protoheme IX farnesyltransferase (298 aa).

A run of 9 helical transmembrane segments spans residues 28–48, 50–70, 95–117, 121–138, 149–169, 176–196, 222–242, 243–263, and 274–294; these read VVAL…EELV, LKVL…AAAI, LSPA…TLYA, PLTA…AVVY, NIVI…TSVT, AVLL…ALAV, CIFL…LIGM, TGMI…AYAW, and AFNM…ILLV.

The protein belongs to the UbiA prenyltransferase family. Protoheme IX farnesyltransferase subfamily.

The protein resides in the cell inner membrane. The enzyme catalyses heme b + (2E,6E)-farnesyl diphosphate + H2O = Fe(II)-heme o + diphosphate. Its pathway is porphyrin-containing compound metabolism; heme O biosynthesis; heme O from protoheme: step 1/1. Converts heme B (protoheme IX) to heme O by substitution of the vinyl group on carbon 2 of heme B porphyrin ring with a hydroxyethyl farnesyl side group. This Idiomarina loihiensis (strain ATCC BAA-735 / DSM 15497 / L2-TR) protein is Protoheme IX farnesyltransferase.